The primary structure comprises 540 residues: Amino acid transporter AVT1B (540 aa).

Over residues M1 to Y11 the composition is skewed to polar residues. A disordered region spans residues M1–S55. A run of 11 helical transmembrane segments spans residues A155–V175, W180–L200, I227–L247, L273–V293, I297–L317, L332–F352, A367–G387, I412–V432, I452–L474, L478–L500, and I511–L531.

This sequence belongs to the amino acid/polyamine transporter 2 family. Amino acid/auxin permease (AAAP) (TC 2.A.18.5) subfamily.

It localises to the membrane. This is Amino acid transporter AVT1B from Arabidopsis thaliana (Mouse-ear cress).